Here is a 1014-residue protein sequence, read N- to C-terminus: C2 domain-containing protein 5 (1014 aa).

The region spanning 1–109 (MPGKLKVKIV…EAATVISGWF (109 aa)) is the C2 domain. Positions 19, 26, 76, 78, 81, and 84 each coordinate Ca(2+). Disordered regions lie at residues 274–328 (LNPN…GRDG), 639–669 (ETVG…AELD), 801–878 (ALQV…HRGG), and 992–1014 (EAGP…DSAT). Over residues 275–292 (NPNTHSSGPSTPLKNQTY) the composition is skewed to polar residues. A compositionally biased stretch (low complexity) spans 293–318 (SFSPSKSFSRQSSSSDTDLSLTPKTG). Over residues 319–328 (MGSGSAGRDG) the composition is skewed to gly residues. Residues 830-840 (SSDSPGPSTFS) are compositionally biased toward polar residues. Residues 993–1006 (AGPGQPTAPGPQSA) show a composition bias toward low complexity.

Ca(2+) is required as a cofactor.

It localises to the cytoplasmic vesicle membrane. Its subcellular location is the cytoplasm. The protein localises to the cell cortex. It is found in the cell membrane. The protein resides in the cell projection. It localises to the ruffle. Its function is as follows. May be required for insulin-stimulated glucose transport and glucose transporter SLC2A4/GLUT4 translocation from intracellular glucose storage vesicle (GSV) to the plasma membrane (PM) in adipocytes. May bind phospholipid membranes in a calcium-dependent manner. In Xenopus tropicalis (Western clawed frog), this protein is C2 domain-containing protein 5 (c2cd5).